Here is a 393-residue protein sequence, read N- to C-terminus: Formate-dependent phosphoribosylglycinamide formyltransferase (393 aa).

Residues 20 to 21 (EL) and Glu80 contribute to the N(1)-(5-phospho-beta-D-ribosyl)glycinamide site. ATP contacts are provided by residues Arg112, Lys153, 158–163 (SSGKGQ), 193–196 (EAFI), and Glu201. One can recognise an ATP-grasp domain in the interval 117-306 (RLAAEDLNLP…EFELHVRAVL (190 aa)). Residues Glu265 and Glu277 each contribute to the Mg(2+) site. N(1)-(5-phospho-beta-D-ribosyl)glycinamide contacts are provided by residues Asp284, Lys354, and 361–362 (RR).

It belongs to the PurK/PurT family. Homodimer.

The enzyme catalyses N(1)-(5-phospho-beta-D-ribosyl)glycinamide + formate + ATP = N(2)-formyl-N(1)-(5-phospho-beta-D-ribosyl)glycinamide + ADP + phosphate + H(+). Its pathway is purine metabolism; IMP biosynthesis via de novo pathway; N(2)-formyl-N(1)-(5-phospho-D-ribosyl)glycinamide from N(1)-(5-phospho-D-ribosyl)glycinamide (formate route): step 1/1. Involved in the de novo purine biosynthesis. Catalyzes the transfer of formate to 5-phospho-ribosyl-glycinamide (GAR), producing 5-phospho-ribosyl-N-formylglycinamide (FGAR). Formate is provided by PurU via hydrolysis of 10-formyl-tetrahydrofolate. This is Formate-dependent phosphoribosylglycinamide formyltransferase from Syntrophotalea carbinolica (strain DSM 2380 / NBRC 103641 / GraBd1) (Pelobacter carbinolicus).